The following is an 86-amino-acid chain: Large ribosomal subunit protein bL31B (86 aa).

It belongs to the bacterial ribosomal protein bL31 family. Type B subfamily. As to quaternary structure, part of the 50S ribosomal subunit.

The protein is Large ribosomal subunit protein bL31B of Streptococcus equi subsp. zooepidemicus (strain H70).